Consider the following 245-residue polypeptide: Small ribosomal subunit protein uS2 (245 aa).

The segment at 226–245 (GGGANVGEMENPPVEATADA) is disordered.

Belongs to the universal ribosomal protein uS2 family.

This Erythrobacter litoralis (strain HTCC2594) protein is Small ribosomal subunit protein uS2.